The following is a 318-amino-acid chain: uncharacterized protein (318 aa).

The protein to A.aeolicus AA07 and AA11.

This is an uncharacterized protein from Aquifex aeolicus (strain VF5).